The following is a 118-amino-acid chain: Developmental pluripotency-associated protein 5A (118 aa).

In terms of domain architecture, KH; atypical spans 24–86 (PEVFQVQSLV…NNKIRAKWML (63 aa)).

Belongs to the KHDC1 family.

It localises to the cytoplasm. In terms of biological role, involved in the maintenance of embryonic stem (ES) cell pluripotency. Dispensable for self-renewal of pluripotent ES cells and establishment of germ cells. Associates with specific target mRNAs. This Mus musculus (Mouse) protein is Developmental pluripotency-associated protein 5A (Dppa5a).